We begin with the raw amino-acid sequence, 101 residues long: NADH-quinone oxidoreductase subunit K (101 aa).

The next 3 helical transmembrane spans lie at Leu-4–Leu-24, Ile-30–Phe-50, and Val-61–Leu-81.

It belongs to the complex I subunit 4L family. In terms of assembly, NDH-1 is composed of 14 different subunits. Subunits NuoA, H, J, K, L, M, N constitute the membrane sector of the complex.

It is found in the cell inner membrane. The enzyme catalyses a quinone + NADH + 5 H(+)(in) = a quinol + NAD(+) + 4 H(+)(out). In terms of biological role, NDH-1 shuttles electrons from NADH, via FMN and iron-sulfur (Fe-S) centers, to quinones in the respiratory chain. The immediate electron acceptor for the enzyme in this species is believed to be ubiquinone. Couples the redox reaction to proton translocation (for every two electrons transferred, four hydrogen ions are translocated across the cytoplasmic membrane), and thus conserves the redox energy in a proton gradient. The sequence is that of NADH-quinone oxidoreductase subunit K from Cupriavidus metallidurans (strain ATCC 43123 / DSM 2839 / NBRC 102507 / CH34) (Ralstonia metallidurans).